We begin with the raw amino-acid sequence, 229 residues long: Sugar fermentation stimulation protein homolog (229 aa).

The protein belongs to the SfsA family.

The chain is Sugar fermentation stimulation protein homolog from Clostridium novyi (strain NT).